Consider the following 158-residue polypeptide: Transcription elongation factor GreA (158 aa).

The protein belongs to the GreA/GreB family.

Functionally, necessary for efficient RNA polymerase transcription elongation past template-encoded arresting sites. The arresting sites in DNA have the property of trapping a certain fraction of elongating RNA polymerases that pass through, resulting in locked ternary complexes. Cleavage of the nascent transcript by cleavage factors such as GreA or GreB allows the resumption of elongation from the new 3'terminus. GreA releases sequences of 2 to 3 nucleotides. This is Transcription elongation factor GreA from Verminephrobacter eiseniae (strain EF01-2).